A 108-amino-acid polypeptide reads, in one-letter code: Placenta-specific protein 9 (108 aa).

Residues 1–19 form the signal peptide; the sequence is MQALLCALAGLALLRAGTG. 2 disordered regions span residues 18–49 and 89–108; these read TGEW…SPGC and SNLP…DDGF. Residues 54-91 adopt a coiled-coil conformation; sequence AVQRRLDIMEETVEKTVEHLEAEVTGLLGLLEELASNL.

The protein belongs to the PLAC9 family. As to expression, highly expressed in placenta, and weakly in ovary, testis, and lung.

It is found in the secreted. The sequence is that of Placenta-specific protein 9 (Plac9) from Mus musculus (Mouse).